A 238-amino-acid polypeptide reads, in one-letter code: Protein-lysine N-methyltransferase efm4 (238 aa).

The protein belongs to the class I-like SAM-binding methyltransferase superfamily. EFM4 family.

It is found in the cytoplasm. The protein resides in the nucleus. Functionally, S-adenosyl-L-methionine-dependent protein-lysine N-methyltransferase that mono- and dimethylates elongation factor 1-alpha at 'Lys-316'. May play a role in intracellular transport. The chain is Protein-lysine N-methyltransferase efm4 from Schizosaccharomyces pombe (strain 972 / ATCC 24843) (Fission yeast).